The chain runs to 312 residues: Pyridoxal kinase (312 aa).

N-acetylmethionine is present on Met-1. 2 residues coordinate pyridoxal: Ser-12 and Thr-47. Thr-47 lines the pyridoxal 5'-phosphate pocket. Ser-59 bears the Phosphoserine mark. ATP is bound at residue Asp-113. Na(+) is bound at residue Asp-113. Asp-118 contacts Mg(2+). Residue Thr-148 participates in Na(+) binding. 150–153 serves as a coordination point for ATP; the sequence is NQFE. The residue at position 164 (Ser-164) is a Phosphoserine. Position 186 (Thr-186) interacts with Na(+). Position 186–187 (186–187) interacts with ATP; that stretch reads TS. Ser-213 bears the Phosphoserine mark. ATP-binding positions include 226–228 and Thr-233; that span reads VDA. Residue 234–235 coordinates pyridoxal 5'-phosphate; sequence GD. The active-site Proton acceptor is Asp-235. Phosphoserine is present on Ser-285.

It belongs to the pyridoxine kinase family. Homodimer. Mg(2+) serves as cofactor. The cofactor is Zn(2+). Requires Co(2+) as cofactor. Mn(2+) is required as a cofactor. In terms of tissue distribution, ubiquitous. Highly expressed in testis. In adult testis and spermatozoa.

It is found in the cytoplasm. It localises to the cytosol. The catalysed reaction is pyridoxal + ATP = pyridoxal 5'-phosphate + ADP + H(+). It catalyses the reaction pyridoxamine + ATP = pyridoxamine 5'-phosphate + ADP + H(+). The enzyme catalyses pyridoxine + ATP = pyridoxine 5'-phosphate + ADP + H(+). Its pathway is cofactor metabolism; pyridoxal 5'-phosphate salvage; pyridoxal 5'-phosphate from pyridoxal: step 1/1. The protein operates within cofactor metabolism; pyridoxal 5'-phosphate salvage; pyridoxine 5'-phosphate from pyridoxine: step 1/1. It functions in the pathway cofactor metabolism; pyridoxal 5'-phosphate salvage; pyridoxamine 5'-phosphate from pyridoxamine: step 1/1. Catalytic activity is inhibited competitively by 4-deoxypyridoxine, and is also inhibited by the benzodiazepine receptor ligands 1012S and ethyl-beta-carboline-3-carboxylate. Inhibited by ginkgotoxin, theophylline, lamotrigine, enprofylline, theobromine, and caffeine. Activity is increased in the presence of K(+)or Na(+). In terms of biological role, catalyzes the phosphorylation of the dietary vitamin B6 vitamers pyridoxal (PL), pyridoxine (PN) and pyridoxamine (PM) to form pyridoxal 5'-phosphate (PLP), pyridoxine 5'-phosphate (PNP) and pyridoxamine 5'-phosphate (PMP), respectively. PLP is the active form of vitamin B6, and acts as a cofactor for over 140 different enzymatic reactions. This chain is Pyridoxal kinase, found in Homo sapiens (Human).